Reading from the N-terminus, the 206-residue chain is MGNLFGKKKATRVTEQDRAVLQLKQQRDKLKQYQKRITLQMDKERQLAKQLLKDGKKDKALLLLKKKRYQDQLLEKTENQISNLERMVQDIEFAQIEMKVIEGLKVGNDCLKKMHEVLSIEEVEKIMDETHDAIEYQKQIDEMLAGSLTQEDEEAVLAELEAITQGEADLELPEVPGEELPEVPEQEPVREKERVKKKPEREMVAV.

G2 is lipidated: N-myristoyl glycine. Positions 11–103 (TRVTEQDRAV…AQIEMKVIEG (93 aa)) form a coiled coil. The disordered stretch occupies residues 167–206 (EADLELPEVPGEELPEVPEQEPVREKERVKKKPEREMVAV). Over residues 168–185 (ADLELPEVPGEELPEVPE) the composition is skewed to acidic residues. The Type-2 MIT-interacting motif signature appears at 170–181 (LELPEVPGEELP). A compositionally biased stretch (basic and acidic residues) spans 187–206 (EPVREKERVKKKPEREMVAV).

The protein belongs to the SNF7 family. As to quaternary structure, probable core component of the endosomal sorting required for transport complex III (ESCRT-III). ESCRT-III components are thought to multimerize to form a flat lattice on the perimeter membrane of the endosome.

The protein resides in the endomembrane system. The protein localises to the late endosome membrane. Its function is as follows. Probable core component of the endosomal sorting required for transport complex III (ESCRT-III) which is involved in multivesicular bodies (MVBs) formation and sorting of endosomal cargo proteins into MVBs. MVBs contain intraluminal vesicles (ILVs) that are generated by invagination and scission from the limiting membrane of the endosome and mostly are delivered to lysosomes enabling degradation of membrane proteins, such as stimulated growth factor receptors, lysosomal enzymes and lipids. In the ESCRT-III complex, it probably serves as an acceptor for the ESCRT-II complex on endosomal membranes. This is Charged multivesicular body protein 6 (chmp6) from Danio rerio (Zebrafish).